Here is a 246-residue protein sequence, read N- to C-terminus: Orotidine 5'-phosphate decarboxylase (246 aa).

Residues aspartate 22, lysine 44, aspartate 71–threonine 80, threonine 131, arginine 192, glutamine 201, glycine 221, and arginine 222 each bind substrate. Lysine 73 serves as the catalytic Proton donor.

This sequence belongs to the OMP decarboxylase family. Type 1 subfamily. As to quaternary structure, homodimer.

It catalyses the reaction orotidine 5'-phosphate + H(+) = UMP + CO2. The protein operates within pyrimidine metabolism; UMP biosynthesis via de novo pathway; UMP from orotate: step 2/2. Functionally, catalyzes the decarboxylation of orotidine 5'-monophosphate (OMP) to uridine 5'-monophosphate (UMP). In Yersinia enterocolitica serotype O:8 / biotype 1B (strain NCTC 13174 / 8081), this protein is Orotidine 5'-phosphate decarboxylase.